The chain runs to 334 residues: MQLKIFLFKLLFLIFFSFSFNNFAFGFFFNNRYDSNFFIDKKYTKDFIFFKKNECFSFLKYKKNFFLNKKIIIGNNHFIGFFQKNRFKIFYIVKSKDTMYSIAKNSGYNYHELSKFNSIKKPYKIIIGQKIWMGDFLIDKNNNDCSILNLEKNSIKQHNSCEVVFKNLLNIEKFLKDNIKTKKICFFCIKKIKKNNNSLKLKFFNFSNNWSWPVKNKNTKYFYIDKLGNKRIEIIGFKGQPVFSTAAGEVVFVTNLFKKYGLLIIIKHDQNYLSIYAFNNSVLVKEKDRVYKNQQIATMGLSSDTNLARLYFEIRYLGESINPLSILPKINTNI.

The region spanning 89–133 (IFYIVKSKDTMYSIAKNSGYNYHELSKFNSIKKPYKIIIGQKIWM) is the LysM domain.

Belongs to the E.coli NlpD/Haemophilus LppB family.

The polypeptide is Protein NlpD/LppB homolog (Buchnera aphidicola subsp. Acyrthosiphon pisum (strain APS) (Acyrthosiphon pisum symbiotic bacterium)).